A 180-amino-acid chain; its full sequence is Large ribosomal subunit protein uL16 (180 aa).

This sequence belongs to the universal ribosomal protein uL16 family.

The sequence is that of Large ribosomal subunit protein uL16 from Pyrobaculum aerophilum (strain ATCC 51768 / DSM 7523 / JCM 9630 / CIP 104966 / NBRC 100827 / IM2).